Reading from the N-terminus, the 584-residue chain is Asparagine synthetase [glutamine-hydrolyzing] 1 (584 aa).

Catalysis depends on Cys-2, which acts as the For GATase activity. A Glutamine amidotransferase type-2 domain is found at 2–185 (CGILAVLGCS…PGHFYSSKLG (184 aa)). L-glutamine contacts are provided by residues 50 to 54 (RLAVI), 75 to 77 (NGE), and Asp-98. An Asparagine synthetase domain is found at 193–516 (PPWFNESVPS…PQNSARLTVP (324 aa)). Residues Leu-231, Val-267, and 341–342 (SG) contribute to the ATP site.

The enzyme catalyses L-aspartate + L-glutamine + ATP + H2O = L-asparagine + L-glutamate + AMP + diphosphate + H(+). The protein operates within amino-acid biosynthesis; L-asparagine biosynthesis; L-asparagine from L-aspartate (L-Gln route): step 1/1. Functionally, essential for nitrogen assimilation, distribution and remobilization within the plant via the phloem. This is Asparagine synthetase [glutamine-hydrolyzing] 1 (ASN1) from Arabidopsis thaliana (Mouse-ear cress).